The sequence spans 95 residues: Late cornified envelope protein 7A (95 aa).

The protein belongs to the LCE family.

Precursors of the cornified envelope of the stratum corneum. This is Late cornified envelope protein 7A from Homo sapiens (Human).